We begin with the raw amino-acid sequence, 929 residues long: Protein unc-45 homolog A (929 aa).

3 TPR repeats span residues 6–39 (VEQL…DATP), 43–76 (AVLH…DGGD), and 77–110 (VKAL…EPKN). Lysine 55 carries the N6-acetyllysine modification. The residue at position 468 (lysine 468) is an N6-acetyllysine.

As to quaternary structure, interacts with PGR isoforms A and B as well as with NR3C1 in the absence of ligand, and with HSP90AB1. Binding to HSP90AB1 involves 2 UNC45A monomers per HSP90AB1 dimer.

The protein localises to the cytoplasm. The protein resides in the perinuclear region. It localises to the nucleus. Its function is as follows. May act as co-chaperone for HSP90 (Potential). Prevents the stimulation of HSP90AB1 ATPase activity by AHSA1. Positive factor in promoting PGR function in the cell. May be necessary for proper folding of myosin (Potential). Necessary for normal cell proliferation. Necessary for normal myotube formation and myosin accumulation during muscle cell development. May play a role in erythropoiesis in stroma cells in the spleen. The sequence is that of Protein unc-45 homolog A (UNC45A) from Pongo abelii (Sumatran orangutan).